A 440-amino-acid chain; its full sequence is Enolase 1-2 (440 aa).

His-160 and Glu-169 together coordinate substrate. Catalysis depends on Glu-212, which acts as the Proton donor. 3 residues coordinate Mg(2+): Asp-247, Glu-296, and Asp-321. Residues Glu-296 and Asp-321 each contribute to the substrate site. The active-site Proton acceptor is Lys-346. Substrate contacts are provided by residues 373-376 (SHRS) and Lys-397.

It belongs to the enolase family. As to quaternary structure, homodimer. The cofactor is Mg(2+).

It is found in the cytoplasm. It catalyses the reaction (2R)-2-phosphoglycerate = phosphoenolpyruvate + H2O. The protein operates within carbohydrate degradation; glycolysis; pyruvate from D-glyceraldehyde 3-phosphate: step 4/5. In Schizosaccharomyces pombe (strain 972 / ATCC 24843) (Fission yeast), this protein is Enolase 1-2 (eno102).